The sequence spans 360 residues: Chorismate synthase (360 aa).

Residue Arg-46 participates in NADP(+) binding. Residues 122–124 (RAS), Gly-282, 297–301 (KPTPS), and Arg-324 contribute to the FMN site.

Belongs to the chorismate synthase family. Requires FMNH2 as cofactor.

The enzyme catalyses 5-O-(1-carboxyvinyl)-3-phosphoshikimate = chorismate + phosphate. It participates in metabolic intermediate biosynthesis; chorismate biosynthesis; chorismate from D-erythrose 4-phosphate and phosphoenolpyruvate: step 7/7. Its function is as follows. Catalyzes the anti-1,4-elimination of the C-3 phosphate and the C-6 proR hydrogen from 5-enolpyruvylshikimate-3-phosphate (EPSP) to yield chorismate, which is the branch point compound that serves as the starting substrate for the three terminal pathways of aromatic amino acid biosynthesis. This reaction introduces a second double bond into the aromatic ring system. The polypeptide is Chorismate synthase (Archaeoglobus fulgidus (strain ATCC 49558 / DSM 4304 / JCM 9628 / NBRC 100126 / VC-16)).